The following is a 447-amino-acid chain: MLHRYLPMTEEDKKEMLQTIGVQTIDELFSDIPESVRFKGDLKIKEAKSEPELLKELSQMASKNANLKEYASFLGAGVYDHYAPVIVDHVISRSEFYTAYTPYQPEISQGELQAIFEFQTMICELTGMDVANSSMYDGGTALAEAAMLAAGHTRKKKILVSSAVHPESRAVLETYAKGQHLEVVEINHKDGVTDLDVLQSEVDDTVACVIVQYPNFFGQVEKLADIEKIVHQQKSLFIVSSNPLSLGALTPPGKFGADIVIGDAQPFGIPTQFGGPHCGYFATTKAFMRKIPGRLVGQTVDSDGKRGFVLTLQAREQHIRRDKATSNICSNQALNALAASVAMTALGKQGVKEMARQNISKAQYAKRQFEAKGFTVTFAGPFFNEFVVDCKRPVKEVNDALLQKNIIGGYDLGRDYKEHENHMLVAVTELRTKDEIDTLVNEMGAIQ.

It belongs to the GcvP family. N-terminal subunit subfamily. As to quaternary structure, the glycine cleavage system is composed of four proteins: P, T, L and H. In this organism, the P 'protein' is a heterodimer of two subunits.

The catalysed reaction is N(6)-[(R)-lipoyl]-L-lysyl-[glycine-cleavage complex H protein] + glycine + H(+) = N(6)-[(R)-S(8)-aminomethyldihydrolipoyl]-L-lysyl-[glycine-cleavage complex H protein] + CO2. Its function is as follows. The glycine cleavage system catalyzes the degradation of glycine. The P protein binds the alpha-amino group of glycine through its pyridoxal phosphate cofactor; CO(2) is released and the remaining methylamine moiety is then transferred to the lipoamide cofactor of the H protein. This chain is Probable glycine dehydrogenase (decarboxylating) subunit 1, found in Bacillus cereus (strain AH187).